The sequence spans 377 residues: UPF0754 membrane protein GK0639 (377 aa).

The next 2 membrane-spanning stretches (helical) occupy residues L7–V27 and Y357–L377.

Belongs to the UPF0754 family.

The protein resides in the cell membrane. This is UPF0754 membrane protein GK0639 from Geobacillus kaustophilus (strain HTA426).